A 183-amino-acid chain; its full sequence is Large ribosomal subunit protein uL10 (183 aa).

It belongs to the universal ribosomal protein uL10 family. Part of the ribosomal stalk of the 50S ribosomal subunit. The N-terminus interacts with L11 and the large rRNA to form the base of the stalk. The C-terminus forms an elongated spine to which L12 dimers bind in a sequential fashion forming a multimeric L10(L12)X complex.

In terms of biological role, forms part of the ribosomal stalk, playing a central role in the interaction of the ribosome with GTP-bound translation factors. The chain is Large ribosomal subunit protein uL10 from Mesomycoplasma hyopneumoniae (strain 7448) (Mycoplasma hyopneumoniae).